A 164-amino-acid chain; its full sequence is HTH-type transcriptional regulator IscR (164 aa).

The region spanning arginine 2 to asparagine 131 is the HTH rrf2-type domain. The H-T-H motif DNA-binding region spans leucine 28–lysine 51. [2Fe-2S] cluster-binding residues include cysteine 92, cysteine 98, and cysteine 104.

[2Fe-2S] cluster serves as cofactor.

In terms of biological role, regulates the transcription of several operons and genes involved in the biogenesis of Fe-S clusters and Fe-S-containing proteins. In Pectobacterium atrosepticum (strain SCRI 1043 / ATCC BAA-672) (Erwinia carotovora subsp. atroseptica), this protein is HTH-type transcriptional regulator IscR.